A 185-amino-acid polypeptide reads, in one-letter code: Large ribosomal subunit protein uL5 (185 aa).

The protein belongs to the universal ribosomal protein uL5 family. In terms of assembly, part of the 50S ribosomal subunit; part of the 5S rRNA/L5/L18/L25 subcomplex. Contacts the 5S rRNA and the P site tRNA. Forms a bridge to the 30S subunit in the 70S ribosome.

Functionally, this is one of the proteins that bind and probably mediate the attachment of the 5S RNA into the large ribosomal subunit, where it forms part of the central protuberance. In the 70S ribosome it contacts protein S13 of the 30S subunit (bridge B1b), connecting the 2 subunits; this bridge is implicated in subunit movement. Contacts the P site tRNA; the 5S rRNA and some of its associated proteins might help stabilize positioning of ribosome-bound tRNAs. The protein is Large ribosomal subunit protein uL5 of Rhodopseudomonas palustris (strain BisB5).